The following is a 361-amino-acid chain: 3-dehydroquinate synthase (361 aa).

NAD(+)-binding positions include 72–77 (SGEKEK), 130–131 (TT), Lys142, and Lys151. Zn(2+) is bound by residues Glu184, His247, and His264.

The protein belongs to the sugar phosphate cyclases superfamily. Dehydroquinate synthase family. Co(2+) serves as cofactor. It depends on Zn(2+) as a cofactor. NAD(+) is required as a cofactor.

The protein resides in the cytoplasm. The catalysed reaction is 7-phospho-2-dehydro-3-deoxy-D-arabino-heptonate = 3-dehydroquinate + phosphate. It participates in metabolic intermediate biosynthesis; chorismate biosynthesis; chorismate from D-erythrose 4-phosphate and phosphoenolpyruvate: step 2/7. In terms of biological role, catalyzes the conversion of 3-deoxy-D-arabino-heptulosonate 7-phosphate (DAHP) to dehydroquinate (DHQ). The sequence is that of 3-dehydroquinate synthase from Bacillus cereus (strain ATCC 10987 / NRS 248).